Consider the following 254-residue polypeptide: NAD kinase (254 aa).

Residue D44 is the Proton acceptor of the active site. NAD(+)-binding positions include 44-45 (DG), 114-115 (NE), D144, A152, 155-160 (TAYNYS), and A179.

It belongs to the NAD kinase family. A divalent metal cation is required as a cofactor.

The protein localises to the cytoplasm. It catalyses the reaction NAD(+) + ATP = ADP + NADP(+) + H(+). In terms of biological role, involved in the regulation of the intracellular balance of NAD and NADP, and is a key enzyme in the biosynthesis of NADP. Catalyzes specifically the phosphorylation on 2'-hydroxyl of the adenosine moiety of NAD to yield NADP. The chain is NAD kinase from Cereibacter sphaeroides (strain ATCC 17029 / ATH 2.4.9) (Rhodobacter sphaeroides).